We begin with the raw amino-acid sequence, 353 residues long: 3'(2'),5'-bisphosphate nucleotidase (353 aa).

D50 serves as the catalytic Proton acceptor. Mg(2+) contacts are provided by E73, D136, I138, and D139. Catalysis depends on T141, which acts as the Proton acceptor. Adenosine 3',5'-bisphosphate is bound by residues T141, H232, S256, K259, R273, and D286. The AMP site is built by H232, S256, K259, R273, and D286. D286 is a Mg(2+) binding site.

It belongs to the inositol monophosphatase superfamily. Mg(2+) is required as a cofactor.

It catalyses the reaction 3'-phosphoadenylyl sulfate + H2O = adenosine 5'-phosphosulfate + phosphate. It carries out the reaction adenosine 3',5'-bisphosphate + H2O = AMP + phosphate. The enzyme catalyses adenosine 2',5'-bisphosphate + H2O = AMP + phosphate. The catalysed reaction is 1D-myo-inositol 1,4-bisphosphate + H2O = 1D-myo-inositol 4-phosphate + phosphate. It catalyses the reaction 1D-myo-inositol 1,3,4-trisphosphate + H2O = 1D-myo-inositol 3,4-bisphosphate + phosphate. Its activity is regulated as follows. Inhibited by Li(+) and Na(+). Its function is as follows. Phosphatase that converts adenosine 3'-phosphate 5'-phosphosulfate (PAPS) to adenosine 5'-phosphosulfate (APS) and 3'(2')-phosphoadenosine 5'-phosphate (PAP) to AMP. May regulate the flux of sulfur in the sulfur-activation pathway by converting PAPS to APS. Is also able to hydrolyze inositol 1,4-bisphosphate (Ins(1,4)P2) and inositol 1,3,4-trisphosphate (Ins(1,3,4)P3), but is not active on inositol 1,4,5-trisphosphate, inositol 1-phosphate, fructose 1,6-bisphosphate, AMP and ATP. Functionally, confers resistance to lithium. The polypeptide is 3'(2'),5'-bisphosphate nucleotidase (tol1) (Schizosaccharomyces pombe (strain 972 / ATCC 24843) (Fission yeast)).